We begin with the raw amino-acid sequence, 103 residues long: UPF0473 protein SGO_2040 (103 aa).

It belongs to the UPF0473 family.

The chain is UPF0473 protein SGO_2040 from Streptococcus gordonii (strain Challis / ATCC 35105 / BCRC 15272 / CH1 / DL1 / V288).